Here is a 262-residue protein sequence, read N- to C-terminus: 3-methyl-2-oxobutanoate hydroxymethyltransferase (262 aa).

Positions 44 and 83 each coordinate Mg(2+). 3-methyl-2-oxobutanoate-binding positions include 44–45 (DS), aspartate 83, and lysine 112. Glutamate 114 contributes to the Mg(2+) binding site. The Proton acceptor role is filled by glutamate 177.

It belongs to the PanB family. As to quaternary structure, homodecamer; pentamer of dimers. Mg(2+) serves as cofactor.

Its subcellular location is the cytoplasm. The catalysed reaction is 3-methyl-2-oxobutanoate + (6R)-5,10-methylene-5,6,7,8-tetrahydrofolate + H2O = 2-dehydropantoate + (6S)-5,6,7,8-tetrahydrofolate. Its pathway is cofactor biosynthesis; coenzyme A biosynthesis. In terms of biological role, catalyzes the reversible reaction in which hydroxymethyl group from 5,10-methylenetetrahydrofolate is transferred onto alpha-ketoisovalerate to form ketopantoate. The sequence is that of 3-methyl-2-oxobutanoate hydroxymethyltransferase from Metallosphaera sedula (strain ATCC 51363 / DSM 5348 / JCM 9185 / NBRC 15509 / TH2).